The following is a 324-amino-acid chain: Acetyl-coenzyme A carboxylase carboxyl transferase subunit alpha (324 aa).

Residues 44–298 (RFQDKLTKLQ…RKELIKQLNI (255 aa)) enclose the CoA carboxyltransferase C-terminal domain.

The protein belongs to the AccA family. As to quaternary structure, acetyl-CoA carboxylase is a heterohexamer composed of biotin carboxyl carrier protein (accB), biotin carboxylase (accC) and two subunits each of ACCase subunit alpha (accA) and ACCase subunit beta (accD).

The protein resides in the plastid. It localises to the chloroplast. It carries out the reaction N(6)-carboxybiotinyl-L-lysyl-[protein] + acetyl-CoA = N(6)-biotinyl-L-lysyl-[protein] + malonyl-CoA. The protein operates within lipid metabolism; malonyl-CoA biosynthesis; malonyl-CoA from acetyl-CoA: step 1/1. In terms of biological role, component of the acetyl coenzyme A carboxylase (ACC) complex. First, biotin carboxylase catalyzes the carboxylation of biotin on its carrier protein (BCCP) and then the CO(2) group is transferred by the carboxyltransferase to acetyl-CoA to form malonyl-CoA. The chain is Acetyl-coenzyme A carboxylase carboxyl transferase subunit alpha from Porphyra purpurea (Red seaweed).